The chain runs to 521 residues: Bifunctional purine biosynthesis protein PurH (521 aa).

Positions 1-145 constitute an MGS-like domain; the sequence is MIKQALISVS…KNHRDVTVVV (145 aa).

It belongs to the PurH family.

The catalysed reaction is (6R)-10-formyltetrahydrofolate + 5-amino-1-(5-phospho-beta-D-ribosyl)imidazole-4-carboxamide = 5-formamido-1-(5-phospho-D-ribosyl)imidazole-4-carboxamide + (6S)-5,6,7,8-tetrahydrofolate. The enzyme catalyses IMP + H2O = 5-formamido-1-(5-phospho-D-ribosyl)imidazole-4-carboxamide. It functions in the pathway purine metabolism; IMP biosynthesis via de novo pathway; 5-formamido-1-(5-phospho-D-ribosyl)imidazole-4-carboxamide from 5-amino-1-(5-phospho-D-ribosyl)imidazole-4-carboxamide (10-formyl THF route): step 1/1. It participates in purine metabolism; IMP biosynthesis via de novo pathway; IMP from 5-formamido-1-(5-phospho-D-ribosyl)imidazole-4-carboxamide: step 1/1. The polypeptide is Bifunctional purine biosynthesis protein PurH (Burkholderia ambifaria (strain MC40-6)).